The following is a 291-amino-acid chain: ATP synthase gamma chain (291 aa).

This sequence belongs to the ATPase gamma chain family. F-type ATPases have 2 components, CF(1) - the catalytic core - and CF(0) - the membrane proton channel. CF(1) has five subunits: alpha(3), beta(3), gamma(1), delta(1), epsilon(1). CF(0) has three main subunits: a, b and c.

The protein localises to the cell membrane. In terms of biological role, produces ATP from ADP in the presence of a proton gradient across the membrane. The gamma chain is believed to be important in regulating ATPase activity and the flow of protons through the CF(0) complex. The polypeptide is ATP synthase gamma chain (Streptococcus pyogenes serotype M1).